The following is a 400-amino-acid chain: Ribosomal RNA large subunit methyltransferase I (400 aa).

Residues 6-84 (FPRLVLAKGR…NEAIDSAFFE (79 aa)) enclose the PUA domain.

This sequence belongs to the methyltransferase superfamily. RlmI family.

The protein localises to the cytoplasm. It catalyses the reaction cytidine(1962) in 23S rRNA + S-adenosyl-L-methionine = 5-methylcytidine(1962) in 23S rRNA + S-adenosyl-L-homocysteine + H(+). In terms of biological role, specifically methylates the cytosine at position 1962 (m5C1962) of 23S rRNA. In Klebsiella pneumoniae subsp. pneumoniae (strain ATCC 700721 / MGH 78578), this protein is Ribosomal RNA large subunit methyltransferase I.